The primary structure comprises 310 residues: MSEELSKKHTTRLNKLQKRLRREVGSAIADYNMIEDGDKIMCCLSGGKDSYAMLDILMNLQQRAPIQFEIIAVNLDQKQPGFPEHVLPAYLEKLNVPYHILEKDTYSIVKDKIPEGKTTCSLCSRLRRGTLYGFAQRIGATKIALGHHRDDIIETLFLNMFFGGKMKAMPPKLLSDDGANVVIRPLAYCREKDLEEYANLREFPIIPCNLCGSQENLKRAAVKDMLNQWDRQYPGRIETIFTAMQNTAPSQGVDREQFDFVSLTRDPNAPMRGDVAEANLPAFDFLDIANSGRIDLDAAKRIDIVNTYEV.

The PP-loop motif motif lies at S45–S50. C120, C123, and C211 together coordinate [4Fe-4S] cluster.

It belongs to the TtcA family. As to quaternary structure, homodimer. The cofactor is Mg(2+). [4Fe-4S] cluster is required as a cofactor.

It localises to the cytoplasm. It carries out the reaction cytidine(32) in tRNA + S-sulfanyl-L-cysteinyl-[cysteine desulfurase] + AH2 + ATP = 2-thiocytidine(32) in tRNA + L-cysteinyl-[cysteine desulfurase] + A + AMP + diphosphate + H(+). It participates in tRNA modification. Its function is as follows. Catalyzes the ATP-dependent 2-thiolation of cytidine in position 32 of tRNA, to form 2-thiocytidine (s(2)C32). The sulfur atoms are provided by the cysteine/cysteine desulfurase (IscS) system. This Shewanella baltica (strain OS195) protein is tRNA-cytidine(32) 2-sulfurtransferase.